The chain runs to 167 residues: SsrA-binding protein (167 aa).

Residues 137–167 form a disordered region; that stretch reads GKQSHDKRDAAKERDWQRDKQRVMRRHNRDA. The span at 139 to 158 shows a compositional bias: basic and acidic residues; sequence QSHDKRDAAKERDWQRDKQR.

The protein belongs to the SmpB family.

The protein resides in the cytoplasm. Its function is as follows. Required for rescue of stalled ribosomes mediated by trans-translation. Binds to transfer-messenger RNA (tmRNA), required for stable association of tmRNA with ribosomes. tmRNA and SmpB together mimic tRNA shape, replacing the anticodon stem-loop with SmpB. tmRNA is encoded by the ssrA gene; the 2 termini fold to resemble tRNA(Ala) and it encodes a 'tag peptide', a short internal open reading frame. During trans-translation Ala-aminoacylated tmRNA acts like a tRNA, entering the A-site of stalled ribosomes, displacing the stalled mRNA. The ribosome then switches to translate the ORF on the tmRNA; the nascent peptide is terminated with the 'tag peptide' encoded by the tmRNA and targeted for degradation. The ribosome is freed to recommence translation, which seems to be the essential function of trans-translation. The protein is SsrA-binding protein of Xanthomonas campestris pv. campestris (strain 8004).